Here is a 365-residue protein sequence, read N- to C-terminus: AP2/ERF and B3 domain-containing protein Os01g0141000 (365 aa).

Positions 1-24 are disordered; sequence MGVVSFSSTSSGASTATTESGGAV. The segment at residues 68–123 is a DNA-binding region (AP2/ERF); the sequence is RYKGVVPQPNGRWGAQIYERHARVWLGTFPDEEAAARAYDVAALRYRGRDAATNFP. The segment at residues 182 to 294 is a DNA-binding region (TF-B3); it reads FEKAVTPSDV…KLLFIDCKKN (113 aa).

It is found in the nucleus. In Oryza sativa subsp. japonica (Rice), this protein is AP2/ERF and B3 domain-containing protein Os01g0141000.